Consider the following 1391-residue polypeptide: Periaxin (1391 aa).

Serine 7 bears the Phosphoserine mark. A PDZ domain is found at 16-99; it reads LVEIIVETEA…YKVSFCLKRT (84 aa). A Nuclear export signal motif is present at residues 70 to 84; the sequence is VFFENFKYEDALRLL. The Nuclear localization signal signature appears at 118 to 196; sequence KGPRAKVAKL…RLQLPRLRVR (79 aa). The residue at position 243 (serine 243) is a Phosphoserine. A run of 12 repeats spans residues 432 to 436, 440 to 444, 448 to 452, 456 to 460, 464 to 468, 469 to 473, 474 to 478, 482 to 486, 487 to 491, 495 to 499, 500 to 504, and 508 to 512. Positions 432 to 719 are 45 X 5 AA approximate tandem repeats of [LVMGIED]-[PQSKHARMI]-[EDKLVTR]-[LIVMAP]-[AQKHRPEVSD]; that may have a tripeptide spacer of [LVIDEA]-[PMSVI]-[KEATDQ]; sequence GPEVKAPTGP…MQVSQVPEVQ (288 aa). The stretch at 513–517 is one 13; approximate repeat; it reads WPEMA. Repeat copies occupy residues 521–525, 526–530, 534–538, 539–543, 547–551, 552–556, 560–564, 565–569, 573–577, 578–582, 583–587, 591–595, 596–600, 601–605, 609–613, 614–618, 619–623, 627–631, 632–636, 637–641, 645–649, 650–654, 655–659, 663–667, 671–675, 676–680, 684–688, 689–693, 697–701, 702–706, 707–711, and 715–719. Serine 848, serine 979, serine 1028, serine 1279, serine 1283, serine 1285, serine 1293, serine 1331, and serine 1337 each carry phosphoserine. The disordered stretch occupies residues 1267–1366; that stretch reads LPRVGFSQSE…DREEGGFRVR (100 aa). Over residues 1275–1285 the composition is skewed to low complexity; the sequence is SESVSGEGSPS. Positions 1354-1363 are enriched in basic and acidic residues; it reads GSRDREEGGF. A Phosphoserine modification is found at serine 1369.

The protein belongs to the periaxin family. In terms of assembly, homodimer (via PDZ domain). Interacts with SCN10A. Found in a complex with SCN10A. Interacts with DRP2. Identified in a dystroglycan complex that contains at least PRX, DRP2, UTRN, DMD and DAG1. Detected in a complex composed of at least EZR, AHNAK, PPL and PRX. Identified in a complex with EZR, AHNAK, BFSP1, BFSP2, ANK2, PLEC, VIM and spectrin. Detected in myelinating Schwann cells in intramuscular nerves in triangularis sterni. Detected in sciatic nerve. Detected in eye lens fiber cells. Isoform 1 is detected in myelinating Schwann cells in sciatic nerve. Isoform 2 is detected in myelinating Schwann cells in sciatic nerve (at protein level). Detected in sciatic nerve.

It is found in the cell membrane. The protein localises to the cell junction. The protein resides in the nucleus. It localises to the cytoplasm. Scaffolding protein that functions as part of a dystroglycan complex in Schwann cells, and as part of EZR and AHNAK-containing complexes in eye lens fiber cells. Required for the maintenance of the peripheral myelin sheath that is essential for normal transmission of nerve impulses and normal perception of sensory stimuli. Required for normal transport of MBP mRNA from the perinuclear to the paranodal regions. Required for normal remyelination after nerve injury. Required for normal elongation of Schwann cells and normal length of the internodes between the nodes of Ranvier. The demyelinated nodes of Ranvier permit saltatory transmission of nerve impulses; shorter internodes cause slower transmission of nerve impulses. Required for the formation of appositions between the abaxonal surface of the myelin sheath and the Schwann cell plasma membrane; the Schwann cell cytoplasm is restricted to regions between these appositions. Required for the formation of Cajal bands and of Schmidt-Lanterman incisures that correspond to short, cytoplasm-filled regions on myelinated nerves. Recruits DRP2 to the Schwann cell plasma membrane. Required for normal protein composition of the eye lens fiber cell plasma membrane and normal eye lens fiber cell morphology. The sequence is that of Periaxin (Prx) from Mus musculus (Mouse).